An 86-amino-acid chain; its full sequence is Small ribosomal subunit protein uS17 (86 aa).

This sequence belongs to the universal ribosomal protein uS17 family. As to quaternary structure, part of the 30S ribosomal subunit.

One of the primary rRNA binding proteins, it binds specifically to the 5'-end of 16S ribosomal RNA. In Marinomonas sp. (strain MWYL1), this protein is Small ribosomal subunit protein uS17.